We begin with the raw amino-acid sequence, 384 residues long: N-acetyldiaminopimelate deacetylase (384 aa).

Aspartate 75 is a catalytic residue. Glutamate 134 (proton acceptor) is an active-site residue.

The protein belongs to the peptidase M20A family. N-acetyldiaminopimelate deacetylase subfamily.

It catalyses the reaction N-acetyl-(2S,6S)-2,6-diaminopimelate + H2O = (2S,6S)-2,6-diaminopimelate + acetate. It functions in the pathway amino-acid biosynthesis; L-lysine biosynthesis via DAP pathway; LL-2,6-diaminopimelate from (S)-tetrahydrodipicolinate (acetylase route): step 3/3. In terms of biological role, catalyzes the conversion of N-acetyl-diaminopimelate to diaminopimelate and acetate. The protein is N-acetyldiaminopimelate deacetylase of Lactobacillus helveticus (strain DPC 4571).